The primary structure comprises 214 residues: Adenylate kinase (214 aa).

ATP is bound at residue 10-15; sequence GAGKGT. Residues 30–59 form an NMP region; sequence STGDMLRAAVKAGSELGLKAKEIMDAGKLV. AMP is bound by residues T31, R36, 57-59, 85-88, and Q92; these read KLV and GFPR. An LID region spans residues 122–159; that stretch reads GRRVHAASGRVYHVKFNPPKVEDKDDVTGEELTIRKDD. ATP contacts are provided by residues R123 and 132-133; that span reads VY. 2 residues coordinate AMP: R156 and R167. R200 contributes to the ATP binding site.

It belongs to the adenylate kinase family. As to quaternary structure, monomer.

The protein localises to the cytoplasm. The catalysed reaction is AMP + ATP = 2 ADP. Its pathway is purine metabolism; AMP biosynthesis via salvage pathway; AMP from ADP: step 1/1. Catalyzes the reversible transfer of the terminal phosphate group between ATP and AMP. Plays an important role in cellular energy homeostasis and in adenine nucleotide metabolism. The sequence is that of Adenylate kinase from Yersinia pseudotuberculosis serotype O:1b (strain IP 31758).